We begin with the raw amino-acid sequence, 233 residues long: Bcl-2-like protein 1 (233 aa).

Positions 4 to 24 match the BH4 motif; the sequence is SNRELVVDFLSYKLSQKGYSW. Residues 27-73 form a disordered region; it reads FSDVEENRTEAPEETEPERETPSAINGNPSWHLADSPAVNGATGHSS. Residue S49 is modified to Phosphoserine; by PLK3. S62 is modified (phosphoserine; by CDK1). A BH3 motif is present at residues 86-100; it reads VKQALREAGDEFELR. Positions 129 to 148 match the BH1 motif; it reads ELFRDGVNWGRIVAFFSFGG. Positions 180–195 match the BH2 motif; it reads PWIQENGGWDTFVDLY. The chain crosses the membrane as a helical span at residues 210–226; it reads FNRWFLTGMTVAGVVLL.

It belongs to the Bcl-2 family. In terms of assembly, homodimer. Interacts with BCL2L11. Interacts with BAD. Interacts with PGAM5. Interacts with HEBP2. Interacts with p53/TP53 and BBC3; interaction with BBC3 disrupts the interaction with p53/TP53. Interacts with ATP5F1A and ATP5F1B; the interactions mediate the association of isoform Bcl-X(L) with the mitochondrial membrane ATP synthase F(1)F(0) ATP synthase. Interacts with VDAC1. Interacts with BCL2L11 (via BH3). Interacts with RNF183. Interacts with GIMAP3/IAN4 and GIMAP5/IAN5. Interacts with GIMAP5 and HSPA8/HSC70; the interaction between HSPA8 and BCL2L1 is impaired in the absence of GIMAP5. Interacts with isoform 4 of CLU; this interaction releases and activates BAX and promotes cell death. As to quaternary structure, forms heterodimers with BAX, BAK or BCL2; heterodimerization with BAX does not seem to be required for anti-apoptotic activity. Interacts with isoform 1 of SIVA1; the interaction inhibits the anti-apoptotic activity. Interacts with IKZF3. Interacts with RTL10/BOP. Interacts with DNM1L and CLTA; DNM1L and BCL2L1 isoform BCL-X(L) may form a complex in synaptic vesicles that also contains clathrin and MFF. Interacts (via the loop between motifs BH4 and BH3) with NLRP1 (via LRR repeats), but not with NLRP2, NLRP3, NLRP4, PYCARD, nor MEFV. Interacts with BECN1. Proteolytically cleaved by caspases during apoptosis. The cleaved protein, lacking the BH4 motif, has pro-apoptotic activity. In terms of processing, phosphorylated on Ser-62 by CDK1. This phosphorylation is partial in normal mitotic cells, but complete in G2-arrested cells upon DNA-damage, thus promoting subsequent apoptosis probably by triggering caspases-mediated proteolysis. Phosphorylated by PLK3, leading to regulate the G2 checkpoint and progression to cytokinesis during mitosis. Phosphorylation at Ser-49 appears during the S phase and G2, disappears rapidly in early mitosis during prometaphase, metaphase and early anaphase, and re-appears during telophase and cytokinesis. Post-translationally, ubiquitinated by RNF183 during prolonged ER stress, leading to degradation by the proteosome. As to expression, expressed in most tissues. Bcl-X(beta) is specifically expressed in cerebellum, heart, and thymus. In the ovary, the predominant form is Bcl-X(L), with a small but detectable level of Bcl-X(S).

The protein localises to the mitochondrion inner membrane. Its subcellular location is the mitochondrion outer membrane. It is found in the mitochondrion matrix. It localises to the cytoplasmic vesicle. The protein resides in the secretory vesicle. The protein localises to the synaptic vesicle membrane. Its subcellular location is the cytoplasm. It is found in the cytosol. It localises to the cytoskeleton. The protein resides in the microtubule organizing center. The protein localises to the centrosome. Its subcellular location is the nucleus membrane. In terms of biological role, potent inhibitor of cell death. Inhibits activation of caspases. Appears to regulate cell death by blocking the voltage-dependent anion channel (VDAC) by binding to it and preventing the release of the caspase activator, CYC1, from the mitochondrial membrane. Also acts as a regulator of G2 checkpoint and progression to cytokinesis during mitosis. Isoform Bcl-X(L) also regulates presynaptic plasticity, including neurotransmitter release and recovery, number of axonal mitochondria as well as size and number of synaptic vesicle clusters. During synaptic stimulation, increases ATP availability from mitochondria through regulation of mitochondrial membrane ATP synthase F(1)F(0) activity and regulates endocytic vesicle retrieval in hippocampal neurons through association with DMN1L and stimulation of its GTPase activity in synaptic vesicles. May attenuate inflammation impairing NLRP1-inflammasome activation, hence CASP1 activation and IL1B release. Functionally, isoform Bcl-X(S) promotes apoptosis. In Rattus norvegicus (Rat), this protein is Bcl-2-like protein 1 (Bcl2l1).